The sequence spans 499 residues: Trichoplein keratin filament-binding protein (499 aa).

Coiled coils occupy residues 17 to 143, 169 to 304, and 405 to 485; these read LEQQ…LYEQ, EQIT…LSAL, and NRER…TQRG. Residues 260–426 are trichohyalin/plectin homology domain; that stretch reads RKMEQCRKKT…RQFTSREKKQ (167 aa).

It belongs to the TCHP family.

It localises to the cytoplasm. The protein localises to the cytoskeleton. The protein resides in the microtubule organizing center. Its subcellular location is the centrosome. In terms of biological role, may act as a 'capping' or 'branching' protein for keratin filaments in the cell periphery. May regulate K8/K18 filament and desmosome organization mainly at the apical or peripheral regions of simple epithelial cells. This chain is Trichoplein keratin filament-binding protein, found in Xenopus laevis (African clawed frog).